The primary structure comprises 275 residues: Phosphonoacetaldehyde hydrolase (275 aa).

Residue Asp-15 is the Nucleophile of the active site. Mg(2+)-binding residues include Asp-15 and Ala-17. The active-site Schiff-base intermediate with substrate is the Lys-56. Residue Asp-189 participates in Mg(2+) binding.

This sequence belongs to the HAD-like hydrolase superfamily. PhnX family. In terms of assembly, homodimer. Requires Mg(2+) as cofactor.

It catalyses the reaction phosphonoacetaldehyde + H2O = acetaldehyde + phosphate + H(+). Its function is as follows. Involved in phosphonate degradation. This is Phosphonoacetaldehyde hydrolase from Pseudomonas putida (strain ATCC 700007 / DSM 6899 / JCM 31910 / BCRC 17059 / LMG 24140 / F1).